Consider the following 85-residue polypeptide: MFAPLAVFGSLGWTEILLILFIALLLFGGKRLPSLAKDLGDGIRSFRKSLTGESDDSSQQISQEQERSVPKEETKTSKSKKSKSA.

Residues 7 to 27 (VFGSLGWTEILLILFIALLLF) form a helical membrane-spanning segment. The interval 50 to 85 (LTGESDDSSQQISQEQERSVPKEETKTSKSKKSKSA) is disordered. Basic and acidic residues predominate over residues 64–76 (EQERSVPKEETKT).

It belongs to the TatA/E family. Forms a complex with TatC.

It localises to the cell inner membrane. Functionally, part of the twin-arginine translocation (Tat) system that transports large folded proteins containing a characteristic twin-arginine motif in their signal peptide across membranes. TatA could form the protein-conducting channel of the Tat system. The sequence is that of Sec-independent protein translocase protein TatA from Leptospira interrogans serogroup Icterohaemorrhagiae serovar Lai (strain 56601).